Reading from the N-terminus, the 159-residue chain is Ribosomal RNA large subunit methyltransferase H (159 aa).

S-adenosyl-L-methionine is bound by residues L76, G108, and 127–132 (FSKMTF).

It belongs to the RNA methyltransferase RlmH family. Homodimer.

The protein resides in the cytoplasm. The catalysed reaction is pseudouridine(1915) in 23S rRNA + S-adenosyl-L-methionine = N(3)-methylpseudouridine(1915) in 23S rRNA + S-adenosyl-L-homocysteine + H(+). Its function is as follows. Specifically methylates the pseudouridine at position 1915 (m3Psi1915) in 23S rRNA. This Clostridium tetani (strain Massachusetts / E88) protein is Ribosomal RNA large subunit methyltransferase H.